We begin with the raw amino-acid sequence, 331 residues long: Biotin synthase (331 aa).

Residues 39 to 264 (SELQTCYLVS…VFPQSMVRLA (226 aa)) enclose the Radical SAM core domain. 3 residues coordinate [4Fe-4S] cluster: cysteine 54, cysteine 58, and cysteine 61. [2Fe-2S] cluster is bound by residues cysteine 98, cysteine 130, cysteine 190, and arginine 262.

This sequence belongs to the radical SAM superfamily. Biotin synthase family. Homodimer. The cofactor is [4Fe-4S] cluster. [2Fe-2S] cluster serves as cofactor.

The catalysed reaction is (4R,5S)-dethiobiotin + (sulfur carrier)-SH + 2 reduced [2Fe-2S]-[ferredoxin] + 2 S-adenosyl-L-methionine = (sulfur carrier)-H + biotin + 2 5'-deoxyadenosine + 2 L-methionine + 2 oxidized [2Fe-2S]-[ferredoxin]. It participates in cofactor biosynthesis; biotin biosynthesis; biotin from 7,8-diaminononanoate: step 2/2. Catalyzes the conversion of dethiobiotin (DTB) to biotin by the insertion of a sulfur atom into dethiobiotin via a radical-based mechanism. The chain is Biotin synthase from Chlamydia abortus (strain DSM 27085 / S26/3) (Chlamydophila abortus).